The following is a 162-amino-acid chain: Transcription elongation factor GreA (162 aa).

The stretch at 44–69 (SENAEYEAAREKQAFVEARIKHLEDI) forms a coiled coil.

It belongs to the GreA/GreB family.

Its function is as follows. Necessary for efficient RNA polymerase transcription elongation past template-encoded arresting sites. The arresting sites in DNA have the property of trapping a certain fraction of elongating RNA polymerases that pass through, resulting in locked ternary complexes. Cleavage of the nascent transcript by cleavage factors such as GreA or GreB allows the resumption of elongation from the new 3'terminus. GreA releases sequences of 2 to 3 nucleotides. The sequence is that of Transcription elongation factor GreA from Rickettsia bellii (strain RML369-C).